Consider the following 704-residue polypeptide: Elongation factor G 1 (704 aa).

Residues 8 to 291 (ERYRNIGISA…AVIDYLPSPA (284 aa)) enclose the tr-type G domain. Residues 17-24 (AHIDAGKT), 88-92 (DTPGH), and 142-145 (NKMD) contribute to the GTP site.

Belongs to the TRAFAC class translation factor GTPase superfamily. Classic translation factor GTPase family. EF-G/EF-2 subfamily.

It is found in the cytoplasm. Catalyzes the GTP-dependent ribosomal translocation step during translation elongation. During this step, the ribosome changes from the pre-translocational (PRE) to the post-translocational (POST) state as the newly formed A-site-bound peptidyl-tRNA and P-site-bound deacylated tRNA move to the P and E sites, respectively. Catalyzes the coordinated movement of the two tRNA molecules, the mRNA and conformational changes in the ribosome. This is Elongation factor G 1 from Burkholderia pseudomallei (strain 1710b).